Consider the following 337-residue polypeptide: Ribosomal RNA small subunit methyltransferase H (337 aa).

Residues 45–47 (GGH), Asp64, Phe91, Asp120, and Gln127 contribute to the S-adenosyl-L-methionine site.

It belongs to the methyltransferase superfamily. RsmH family.

Its subcellular location is the cytoplasm. The catalysed reaction is cytidine(1402) in 16S rRNA + S-adenosyl-L-methionine = N(4)-methylcytidine(1402) in 16S rRNA + S-adenosyl-L-homocysteine + H(+). Its function is as follows. Specifically methylates the N4 position of cytidine in position 1402 (C1402) of 16S rRNA. This chain is Ribosomal RNA small subunit methyltransferase H, found in Corynebacterium glutamicum (strain R).